A 509-amino-acid chain; its full sequence is MRSSFSKCKVNTCNPSNCLEVDILIVGGGASGIYSAWRLSQTYPNKKVLVIEEKSYLGGRLESVYFGNEKIYAEVGGMRTFPSIDLYVTAVIKKLKLQSIPVPYIEPDNIAYVKNTRLTVEATSIGPSSNPEKQKLIQLYKIPPDEQNISTNDIIYAAAVRAAPTFPEDWRTVYDYPELNNETFSEMFSEQGVSANTQQVFEVFSGYSFFISQRLAASTGIRENISISGENNQHFVVGGYSSIVFGMTDETFCNPNYQLFLNTSIKKITPSNSPNGLHTSILVDTLTGLPITIKSESIILSVPKDSLNRIVAPITPNTIETMNSLTDWRAFKAFLLVDQTTYQLISMNGHMKGRGISDLPARQVWAYSGNPPCVLIYCDNAYADFWKKYINDEINNCFPKFHDPCINKPLVSELKRQIGIIYSVDPSKIVVNKILYKYWYAGAYFSKPSDIPKLFEEVRTPLGPEYSVYLVGSDISVSQGWVDGALNTADNLLVKYYGVTSILDENRLY.

It is found in the virion. This is an uncharacterized protein from Acanthamoeba polyphaga mimivirus (APMV).